The chain runs to 162 residues: Dihydrofolate reductase (162 aa).

The 159-residue stretch at 3–161 (KITLIAACAE…TRYAFVHYLR (159 aa)) folds into the DHFR domain. 7–9 (IAA) is a substrate binding site. NADP(+) contacts are provided by residues 8–9 (AA) and 16–21 (IGAGNA). Residue Asp-29 participates in substrate binding. NADP(+) is bound at residue 45–48 (GRKT). Position 60 (Arg-60) interacts with substrate. Residues 65–68 (ISRQ) and 98–103 (MGGAQI) each bind NADP(+). Position 117 (Thr-117) interacts with substrate.

This sequence belongs to the dihydrofolate reductase family.

The enzyme catalyses (6S)-5,6,7,8-tetrahydrofolate + NADP(+) = 7,8-dihydrofolate + NADPH + H(+). The protein operates within cofactor biosynthesis; tetrahydrofolate biosynthesis; 5,6,7,8-tetrahydrofolate from 7,8-dihydrofolate: step 1/1. Its function is as follows. Key enzyme in folate metabolism. Catalyzes an essential reaction for de novo glycine and purine synthesis, and for DNA precursor synthesis. The polypeptide is Dihydrofolate reductase (folA) (Neisseria meningitidis serogroup B (strain ATCC BAA-335 / MC58)).